A 356-amino-acid chain; its full sequence is Poly(rC)-binding protein 1 (356 aa).

Methionine 1 carries the post-translational modification N-acetylmethionine. KH domains lie at 13-75 (TLTI…FAMI) and 97-162 (PVTL…VKQI). Residue lysine 115 forms a Glycyl lysine isopeptide (Lys-Gly) (interchain with G-Cter in SUMO2) linkage. Residues serine 173, serine 189, serine 190, serine 246, serine 264, and serine 273 each carry the phosphoserine modification. The 65-residue stretch at 279-343 (QTTHELTIPN…ASISLAQYLI (65 aa)) folds into the KH 3 domain.

Post-translationally, phosphorylated; lowers poly(rC)-binding activity.

Its subcellular location is the nucleus. The protein resides in the cytoplasm. Its function is as follows. Single-stranded nucleic acid binding protein that binds preferentially to oligo dC. Together with PCBP2, required for erythropoiesis, possibly by regulating mRNA splicing. The sequence is that of Poly(rC)-binding protein 1 (PCBP1) from Bos taurus (Bovine).